The primary structure comprises 242 residues: Pyridoxine 5'-phosphate synthase (242 aa).

A 3-amino-2-oxopropyl phosphate-binding site is contributed by asparagine 6. Position 8–9 (8–9 (DH)) interacts with 1-deoxy-D-xylulose 5-phosphate. Arginine 17 is a binding site for 3-amino-2-oxopropyl phosphate. Residue histidine 42 is the Proton acceptor of the active site. 1-deoxy-D-xylulose 5-phosphate is bound by residues arginine 44 and histidine 49. The Proton acceptor role is filled by glutamate 69. Threonine 99 serves as a coordination point for 1-deoxy-D-xylulose 5-phosphate. The Proton donor role is filled by histidine 190. Residues glycine 191 and 212 to 213 (GH) each bind 3-amino-2-oxopropyl phosphate.

This sequence belongs to the PNP synthase family. Homooctamer; tetramer of dimers.

It localises to the cytoplasm. The enzyme catalyses 3-amino-2-oxopropyl phosphate + 1-deoxy-D-xylulose 5-phosphate = pyridoxine 5'-phosphate + phosphate + 2 H2O + H(+). It participates in cofactor biosynthesis; pyridoxine 5'-phosphate biosynthesis; pyridoxine 5'-phosphate from D-erythrose 4-phosphate: step 5/5. Catalyzes the complicated ring closure reaction between the two acyclic compounds 1-deoxy-D-xylulose-5-phosphate (DXP) and 3-amino-2-oxopropyl phosphate (1-amino-acetone-3-phosphate or AAP) to form pyridoxine 5'-phosphate (PNP) and inorganic phosphate. The sequence is that of Pyridoxine 5'-phosphate synthase from Neisseria meningitidis serogroup B (strain ATCC BAA-335 / MC58).